A 154-amino-acid polypeptide reads, in one-letter code: Prefoldin subunit alpha (154 aa).

Positions 119 to 154 (EKAEVETEMEELEQQAQQMQQQQMQQMMQQQEQEDE) are disordered. The span at 132 to 154 (QQAQQMQQQQMQQMMQQQEQEDE) shows a compositional bias: low complexity.

This sequence belongs to the prefoldin subunit alpha family. Heterohexamer of two alpha and four beta subunits.

Its subcellular location is the cytoplasm. Functionally, molecular chaperone capable of stabilizing a range of proteins. Seems to fulfill an ATP-independent, HSP70-like function in archaeal de novo protein folding. In Haloarcula marismortui (strain ATCC 43049 / DSM 3752 / JCM 8966 / VKM B-1809) (Halobacterium marismortui), this protein is Prefoldin subunit alpha.